The following is a 196-amino-acid chain: MEVHNVDLTISAVSDEQYPKTNIPEIALVGRSNVGKSSLTNVLINRRNFAHTSSQPGKTQTLNFYDVEDKVYFVDVPGYGYAKVSKKERERFGKMIEQYLTQREQLRGVIQLVDARHEPTPDDVNMYNWLQYYNIPTLIVGTKIDKVKRSAWNRQLSLIKKTLDVESSTPIILFSATEKKGKDDVWQWIEERMGKN.

Residues Asn-22–Lys-195 form the EngB-type G domain. GTP-binding positions include Gly-30 to Ser-37, Gly-57 to Thr-61, Asp-75 to Gly-78, Thr-142 to Asp-145, and Phe-174 to Ala-176. 2 residues coordinate Mg(2+): Ser-37 and Thr-59.

The protein belongs to the TRAFAC class TrmE-Era-EngA-EngB-Septin-like GTPase superfamily. EngB GTPase family. It depends on Mg(2+) as a cofactor.

In terms of biological role, necessary for normal cell division and for the maintenance of normal septation. The sequence is that of Probable GTP-binding protein EngB from Limosilactobacillus reuteri (strain DSM 20016) (Lactobacillus reuteri).